The chain runs to 135 residues: Universal stress protein Aq_178 (135 aa).

It belongs to the universal stress protein A family.

This chain is Universal stress protein Aq_178, found in Aquifex aeolicus (strain VF5).